The primary structure comprises 455 residues: MFS-type transporter SLC18B1 (455 aa).

Met1 carries the post-translational modification N-acetylmethionine. Residues 1 to 26 (MDTAGPPAPAGTEGDGPGGSTGETSR) form a disordered region. Over 1–32 (MDTAGPPAPAGTEGDGPGGSTGETSRRLSKEQ) the chain is Cytoplasmic. Ser20 is modified (phosphoserine). A helical transmembrane segment spans residues 33–53 (IFVLVSAASMNLGCMMTYSIL). The Extracellular portion of the chain corresponds to 54 to 69 (GPFFPKEAEKKGASNT). The chain crosses the membrane as a helical span at residues 70–90 (TIGMIFGCYALFELLASLVFG). Topologically, residues 91–99 (KYLVHIGAK) are cytoplasmic. Residues 100 to 120 (FMFIAGMFVSGGVTILFGVLD) traverse the membrane as a helical segment. Topologically, residues 121-126 (QLPEGP) are extracellular. Residues 127–147 (IFIAMCFLVRIVDAIGFGAAI) traverse the membrane as a helical segment. Residues 148-166 (TASSSILAKAFPNNVATVM) lie on the Cytoplasmic side of the membrane. Residues 167–187 (GSLEVFSGLGLVAGPPLGGLL) form a helical membrane-spanning segment. The Extracellular segment spans residues 188–194 (YQSFGYE). A helical membrane pass occupies residues 195-215 (VPFIFLGCIVLLMIPLNLCIL). Topologically, residues 216–232 (PSYESDAGKQSFWKLVT) are cytoplasmic. Residues 233-253 (LPKIGLIAFVIISLSSCFGFL) form a helical membrane-spanning segment. Over 254–271 (DPTLSLFVMKKFSLSTGY) the chain is Extracellular. Residues 272-292 (VGLVFLGLSLSYAISSPLFGL) form a helical membrane-spanning segment. Topologically, residues 293–303 (LSDKMPNLRKW) are cytoplasmic. Residues 304-324 (FLVFGNLITAGCYMLLGPIPL) form a helical membrane-spanning segment. Residues 325 to 330 (LHIKSQ) are Extracellular-facing. Residues 331–351 (LWLLVLVLVINGVSAGMSIIP) form a helical membrane-spanning segment. Over 352-376 (TFPEMLSCAYANGFEDGISTLGLVS) the chain is Cytoplasmic. Residues 377–397 (GLFGAMWSVGAFMGPILGGFL) traverse the membrane as a helical segment. Topologically, residues 398-406 (CEKIGFEWA) are extracellular. A helical transmembrane segment spans residues 407 to 427 (AAIQGLWTLLSGVAMALFYLW). Residues 428–455 (EDSTMRRSKAQNILGTEEEQAALLPNDT) are Cytoplasmic-facing.

In terms of tissue distribution, expressed in brain structures, particularly in hippocampus, cortex, and cerebellum (at protein level). Expressed in astrocytes and hippocampal neurons (at protein level). Expressed in peritoneal mast cells.

The protein resides in the cytoplasmic vesicle. Its subcellular location is the secretory vesicle membrane. The protein localises to the secretory vesicle. It localises to the synaptic vesicle membrane. It carries out the reaction spermine(in) + n H(+)(out) = spermine(out) + n H(+)(in). The enzyme catalyses spermidine(in) + n H(+)(out) = spermidine(out) + n H(+)(in). The catalysed reaction is serotonin(in) + n H(+)(out) = serotonin(out) + n H(+)(in). In terms of biological role, proton-coupled polyamine antiporter involved in the translocation of polyamines from cytosol into secretory vesicles prior to their release via exocytosis. Uses the electrochemical proton gradient generated by a V-type proton-pumping ATPase to couple the efflux of protons with the uptake of a polyamine molecule. Facilitates vesicular storage of spermine and spermidine in astrocytes with an impact on glutamatergic neuronal transmission and memory formation. Upon antigen stimulation, regulates polyamine accumulation and release in mast cell secretory granules, which in turn potentiates mast cell degranulation and histamine secretion. The chain is MFS-type transporter SLC18B1 from Rattus norvegicus (Rat).